Here is a 361-residue protein sequence, read N- to C-terminus: Chorismate synthase (361 aa).

R48 contributes to the NADP(+) binding site. FMN is bound by residues R125–S127, N238–A239, G278, K293–S297, and R319.

The protein belongs to the chorismate synthase family. Homotetramer. The cofactor is FMNH2.

It carries out the reaction 5-O-(1-carboxyvinyl)-3-phosphoshikimate = chorismate + phosphate. It functions in the pathway metabolic intermediate biosynthesis; chorismate biosynthesis; chorismate from D-erythrose 4-phosphate and phosphoenolpyruvate: step 7/7. Functionally, catalyzes the anti-1,4-elimination of the C-3 phosphate and the C-6 proR hydrogen from 5-enolpyruvylshikimate-3-phosphate (EPSP) to yield chorismate, which is the branch point compound that serves as the starting substrate for the three terminal pathways of aromatic amino acid biosynthesis. This reaction introduces a second double bond into the aromatic ring system. This Aliivibrio fischeri (strain MJ11) (Vibrio fischeri) protein is Chorismate synthase.